The chain runs to 700 residues: Centrosomal protein of 63 kDa (700 aa).

Methionine 1 carries the post-translational modification N-acetylmethionine. Coiled-coil stretches lie at residues 73-283 (KEVG…ETFI) and 343-533 (LQAE…MCKK). Phosphoserine is present on residues serine 278, lysine 488, and leucine 492. Positions 570–603 (QYKTGHHSPRGQTLDSIDPVARGPSPLSSHISPG) are disordered. Residues 593–603 (PSPLSSHISPG) show a composition bias toward low complexity.

It belongs to the CEP63 family. Interacts with CEP152 and CDK1; these interactions recruit both ligands to centrosomes. Interacts with CDK2, CDK5RAP2, WDR62, CEP90, KIAA0753/moonraker and CCDC14. CEP63, CDK5RAP2, CEP152, WDR62 are proposed to form a stepwise assembled complex at the centrosome forming a ring near parental centrioles. Interacts with CCDC57; the interaction is required for their location to proximal end of centrioles. Interacts with FXR1; promoting its stabilization. Post-translationally, polyubiquitinated via 'Lys-48'-linked ubiquitin, leading to its degradation. Deubiquitinated by USP36, promoting its stabilization.

It is found in the cytoplasm. The protein resides in the cytoskeleton. It localises to the microtubule organizing center. The protein localises to the centrosome. Its subcellular location is the centriole. It is found in the centriolar satellite. In terms of biological role, required for normal spindle assembly. Plays a key role in mother-centriole-dependent centriole duplication; the function also seems to involve CEP152, CDK5RAP2 and WDR62 through a stepwise assembled complex at the centrosome that recruits CDK2 required for centriole duplication. Reported to be required for centrosomal recruitment of CEP152; however, this function has been questioned. Also recruits CDK1 to centrosomes. Plays a role in DNA damage response. Following DNA damage, such as double-strand breaks (DSBs), is removed from centrosomes; this leads to the inactivation of spindle assembly and delay in mitotic progression. Promotes stabilization of FXR1 protein by inhibiting FXR1 ubiquitination. This Mus musculus (Mouse) protein is Centrosomal protein of 63 kDa.